Consider the following 331-residue polypeptide: Cytochrome bo(3) ubiquinol oxidase subunit 2 (331 aa).

An N-terminal signal peptide occupies residues 1-23; it reads MTKANPFAALKWLSLAPALLLGG. Cys-24 carries N-palmitoyl cysteine lipidation. Cys-24 is lipidated: S-diacylglycerol cysteine. At 24-41 the chain is on the periplasmic side; sequence CDMTLFNPKGQVGMDERT. Residues 42 to 62 form a helical membrane-spanning segment; it reads LIITATLLMLIVVIPVIVMTL. Residues 63-86 lie on the Cytoplasmic side of the membrane; sequence AFAWKYRASNTQAEYKPDWHHSNR. The helical transmembrane segment at 87–107 threads the bilayer; that stretch reads IEAVVWLVPCVIIAILGWITW. At 108–331 the chain is on the periplasmic side; that stretch reads ESTHKLDPYR…DMHMQPSTQE (224 aa).

The protein belongs to the cytochrome c oxidase subunit 2 family. As to quaternary structure, heterooctamer of two A chains, two B chains, two C chains and two D chains.

The protein resides in the cell inner membrane. Its function is as follows. Cytochrome bo(3) ubiquinol terminal oxidase is the component of the aerobic respiratory chain of E.coli that predominates when cells are grown at high aeration. Has proton pump activity across the membrane in addition to electron transfer, pumping 2 protons/electron. This Pseudomonas aeruginosa (strain ATCC 15692 / DSM 22644 / CIP 104116 / JCM 14847 / LMG 12228 / 1C / PRS 101 / PAO1) protein is Cytochrome bo(3) ubiquinol oxidase subunit 2 (cyoA).